A 294-amino-acid polypeptide reads, in one-letter code: UPF0761 membrane protein YPN_0254 (294 aa).

Helical transmembrane passes span 44–64 (LLSL…FPMF), 67–87 (ISIK…GDII), 108–128 (GLIV…NIIW), 136–156 (LVFS…LVGA), 185–205 (VFPL…VPTV), 212–232 (ALIG…GFAM), and 246–266 (VLAV…IVLL).

It belongs to the UPF0761 family.

It localises to the cell inner membrane. The sequence is that of UPF0761 membrane protein YPN_0254 from Yersinia pestis bv. Antiqua (strain Nepal516).